The sequence spans 358 residues: Photosystem II protein D1 2 (358 aa).

The next 3 helical transmembrane spans lie at 28–45 (YVGWFGVLMIPCLLAATT), 117–132 (HFLIGISAYMGRQWEL), and 141–155 (WICVAYSAPLSAAFA). H117 provides a ligand contact to chlorophyll a. Y125 serves as a coordination point for pheophytin a. Residues D169 and E188 each coordinate [CaMn4O5] cluster. The helical transmembrane segment at 196-217 (FHMLGVAGVFGGSLFSAMHGSL) threads the bilayer. Residue H197 coordinates chlorophyll a. A quinone is bound by residues H214 and 263-264 (SF). Residue H214 participates in Fe cation binding. H271 serves as a coordination point for Fe cation. Residues 273–287 (FLAAWPVVGIWFTSM) traverse the membrane as a helical segment. H331, E332, D341, and A343 together coordinate [CaMn4O5] cluster. A propeptide spanning residues 344–358 (ATESTPVALQAPTIG) is cleaved from the precursor.

Belongs to the reaction center PufL/M/PsbA/D family. PSII is composed of 1 copy each of membrane proteins PsbA, PsbB, PsbC, PsbD, PsbE, PsbF, PsbH, PsbI, PsbJ, PsbK, PsbL, PsbM, PsbT, PsbX, PsbY, PsbZ, Psb30/Ycf12, peripheral proteins PsbO, CyanoQ (PsbQ), PsbU, PsbV and a large number of cofactors. It forms dimeric complexes. Requires The D1/D2 heterodimer binds P680, chlorophylls that are the primary electron donor of PSII, and subsequent electron acceptors. It shares a non-heme iron and each subunit binds pheophytin, quinone, additional chlorophylls, carotenoids and lipids. D1 provides most of the ligands for the Mn4-Ca-O5 cluster of the oxygen-evolving complex (OEC). There is also a Cl(-1) ion associated with D1 and D2, which is required for oxygen evolution. The PSII complex binds additional chlorophylls, carotenoids and specific lipids. as cofactor. Tyr-160 forms a radical intermediate that is referred to as redox-active TyrZ, YZ or Y-Z. In terms of processing, C-terminally processed by CtpA; processing is essential to allow assembly of the oxygen-evolving complex and thus photosynthetic growth.

The protein resides in the cellular thylakoid membrane. The catalysed reaction is 2 a plastoquinone + 4 hnu + 2 H2O = 2 a plastoquinol + O2. Functionally, photosystem II (PSII) is a light-driven water:plastoquinone oxidoreductase that uses light energy to abstract electrons from H(2)O, generating O(2) and a proton gradient subsequently used for ATP formation. It consists of a core antenna complex that captures photons, and an electron transfer chain that converts photonic excitation into a charge separation. The D1/D2 (PsbA/PsbD) reaction center heterodimer binds P680, the primary electron donor of PSII as well as several subsequent electron acceptors. The polypeptide is Photosystem II protein D1 2 (Synechococcus sp. (strain WH7803)).